The following is a 369-amino-acid chain: MLNLKVAKEQATIVVAMSGGVDSSTVAAILKEDGYNVIGITMQLYNHDTAINRKGACCAGQDIYDAKFVANQLQIPHYVLNYKDKFKESVIDNFIESYINGETPLPCVQCNQSVKFHDLLNFAKDLQADALVTGHYVRRIDTANGIELHKAVDSKKDQSYFLFATTKSQLQYLHFPLGNMTKDETRYHANRYGLHIADKPDSQDICFVADGAYHNVVAKLKPNAKKPGKIVHIDGYILGEHQGIINFTIGQRRRIGISFSDPLYVINIDAQQNIVYVGPESKLFKTTFMIHSLNWLGPGNMLVEPLDVEVKVRSTHSAVRAKLYPYSNSMVKVILNEPEKAIAPGQACVIYKGDLVLGGGWIAKEQTQS.

ATP contacts are provided by residues 16-23 (AMSGGVDS) and Met-42. Residue Cys-110 is the Nucleophile of the active site. A disulfide bond links Cys-110 and Cys-206. ATP is bound at residue Gly-134. The tract at residues 156-158 (KDQ) is interaction with tRNA. Catalysis depends on Cys-206, which acts as the Cysteine persulfide intermediate.

It belongs to the MnmA/TRMU family.

It is found in the cytoplasm. It catalyses the reaction S-sulfanyl-L-cysteinyl-[protein] + uridine(34) in tRNA + AH2 + ATP = 2-thiouridine(34) in tRNA + L-cysteinyl-[protein] + A + AMP + diphosphate + H(+). Catalyzes the 2-thiolation of uridine at the wobble position (U34) of tRNA, leading to the formation of s(2)U34. This chain is tRNA-specific 2-thiouridylase MnmA, found in Orientia tsutsugamushi (strain Boryong) (Rickettsia tsutsugamushi).